A 433-amino-acid polypeptide reads, in one-letter code: AP-2 complex subunit mu (433 aa).

Residues 168 to 432 (RNELFLDVLE…IGRSGIYETR (265 aa)) enclose the MHD domain. A 1,2-diacyl-sn-glycero-3-phospho-(1D-myo-inositol-3,4,5-trisphosphate) contacts are provided by lysine 339, lysine 343, and lysine 352.

Belongs to the adaptor complexes medium subunit family. Adaptor protein complex 2 (AP-2) is a heterotetramer composed of two large adaptins (alpha-type subunit and beta-type subunit), a medium adaptin (mu-type subunit) and a small adaptin (sigma-type subunit).

Its subcellular location is the cell membrane. It is found in the membrane. The protein localises to the coated pit. Its function is as follows. Component of the adaptor complexes which link clathrin to receptors in coated vesicles. Clathrin-associated protein complexes are believed to interact with the cytoplasmic tails of membrane proteins, leading to their selection and concentration. AP50 is a subunit of the plasma membrane adaptor. The complex binds polyphosphoinositide-containing lipids. The sequence is that of AP-2 complex subunit mu (AP2M1) from Gallus gallus (Chicken).